Here is a 228-residue protein sequence, read N- to C-terminus: Putative N-acetylmannosamine-6-phosphate 2-epimerase (228 aa).

This sequence belongs to the NanE family.

It catalyses the reaction an N-acyl-D-glucosamine 6-phosphate = an N-acyl-D-mannosamine 6-phosphate. It functions in the pathway amino-sugar metabolism; N-acetylneuraminate degradation; D-fructose 6-phosphate from N-acetylneuraminate: step 3/5. In terms of biological role, converts N-acetylmannosamine-6-phosphate (ManNAc-6-P) to N-acetylglucosamine-6-phosphate (GlcNAc-6-P). The sequence is that of Putative N-acetylmannosamine-6-phosphate 2-epimerase from Thermosynechococcus vestitus (strain NIES-2133 / IAM M-273 / BP-1).